The primary structure comprises 201 residues: Protein OPI10 homolog (201 aa).

Belongs to the OPI10 family.

This Anopheles gambiae (African malaria mosquito) protein is Protein OPI10 homolog.